The primary structure comprises 514 residues: Major facilitator superfamily domain-containing protein 4A (514 aa).

Helical transmembrane passes span 19 to 39, 53 to 73, 82 to 102, 107 to 127, and 139 to 159; these read LTYW…GPTL, ISWV…LGGV, LWAL…IPFC, VLAL…TVAN, and AVFL…SPLI. Residues Asn-177 and Asn-203 are each glycosylated (N-linked (GlcNAc...) asparagine). Transmembrane regions (helical) follow at residues 221–241, 307–327, 347–367, 376–396, 400–420, 438–458, and 466–486; these read YAFW…LMLL, FFAI…LTGA, VAGY…LLSI, ATMV…LLIF, VVFL…TFPS, VLVT…GSIF, and FLVC…LLLF.

This sequence belongs to the major facilitator superfamily.

Its subcellular location is the membrane. The chain is Major facilitator superfamily domain-containing protein 4A (MFSD4A) from Pongo abelii (Sumatran orangutan).